A 252-amino-acid polypeptide reads, in one-letter code: tRNA pseudouridine synthase A (252 aa).

The active-site Nucleophile is Asp-54. Tyr-113 lines the substrate pocket.

The protein belongs to the tRNA pseudouridine synthase TruA family. Homodimer.

It catalyses the reaction uridine(38/39/40) in tRNA = pseudouridine(38/39/40) in tRNA. Formation of pseudouridine at positions 38, 39 and 40 in the anticodon stem and loop of transfer RNAs. This chain is tRNA pseudouridine synthase A, found in Bacteroides fragilis (strain ATCC 25285 / DSM 2151 / CCUG 4856 / JCM 11019 / LMG 10263 / NCTC 9343 / Onslow / VPI 2553 / EN-2).